Consider the following 209-residue polypeptide: MEPVLTQNRVLTVPNMLSVIRLALIPAFVYVVLSAHANGWGVAILVFSGVSDWADGKIARLLNQSSRLGALLDPAVDRLYMVTVPIVFGLSGIVPWWFVLTLLTRDALLAGTLPLLWSRGLSALPVTYVGKAATFGFMVGFPTILLGQCDPLWSHVLLACGWAFLIWGMYAYLWAFVLYAVQMTMVVRQMPKLKGRAHRPAAQNAGERG.

Helical transmembrane passes span 27-47 (AFVYVVLSAHANGWGVAILVF), 82-102 (VTVPIVFGLSGIVPWWFVLTL), 126-146 (VTYVGKAATFGFMVGFPTILL), and 157-177 (LLACGWAFLIWGMYAYLWAFV).

It belongs to the CDP-alcohol phosphatidyltransferase class-I family.

Its subcellular location is the cell membrane. It catalyses the reaction a CDP-1,2-diacyl-sn-glycerol + a 1,2-diacyl-sn-glycero-3-phospho-(1'-sn-glycerol) = a cardiolipin + CMP + H(+). It functions in the pathway lipid metabolism; phospholipid metabolism. In terms of biological role, may catalyze the biosynthesis of cardiolipin from phosphatidylglycerol (PG) and CDP-diacylglycerol. This is Putative cardiolipin synthase from Mycobacterium bovis (strain ATCC BAA-935 / AF2122/97).